Consider the following 106-residue polypeptide: UPF0060 membrane protein CHU_3331 (106 aa).

The next 4 helical transmembrane spans lie at 5 to 25 (FYFI…WLHF), 31 to 51 (ALLL…LTKI), 59 to 79 (AYAV…YGIE), and 85 to 105 (IWDY…LFAP).

This sequence belongs to the UPF0060 family.

It is found in the cell inner membrane. This is UPF0060 membrane protein CHU_3331 from Cytophaga hutchinsonii (strain ATCC 33406 / DSM 1761 / CIP 103989 / NBRC 15051 / NCIMB 9469 / D465).